A 94-amino-acid chain; its full sequence is Small ribosomal subunit protein bS6 (94 aa).

Belongs to the bacterial ribosomal protein bS6 family.

Functionally, binds together with bS18 to 16S ribosomal RNA. In Clostridium botulinum (strain Kyoto / Type A2), this protein is Small ribosomal subunit protein bS6.